The primary structure comprises 263 residues: Calpain small subunit 1 (263 aa).

Position 1 is an N-acetylmethionine (Met-1). Ser-6 is modified (phosphoserine). Residues 91–125 (EEVRQFRRLFAQLAGDDMEVSATELMNILNKVVTR) enclose the EF-hand 1; atypical domain. 10 residues coordinate Ca(2+): Ala-104, Asp-107, Glu-109, Glu-114, Asp-132, Asp-147, Asp-149, Thr-151, Lys-153, and Glu-158. 4 consecutive EF-hand domains span residues 134–167 (FGID…NNIK), 164–199 (NNIK…AGFR), 200–228 (LNEH…ISCL), and 229–263 (VRLD…TMYS). Lys-174 carries the post-translational modification N6-acetyllysine. Residues Asp-177, Asp-179, Ser-181, Thr-183, Glu-188, and Asp-220 each contribute to the Ca(2+) site.

As to quaternary structure, homodimer or heterodimer of a large (catalytic) and a small (regulatory) subunit. In presence of calcium, the heterodimer dissociates.

The protein localises to the cytoplasm. Its subcellular location is the cell membrane. In terms of biological role, regulatory subunit of the calcium-regulated non-lysosomal thiol-protease which catalyzes limited proteolysis of substrates involved in cytoskeletal remodeling and signal transduction. Essential for embryonic development. This chain is Calpain small subunit 1 (CAPNS1), found in Bos taurus (Bovine).